Here is a 94-residue protein sequence, read N- to C-terminus: Lipolysis-activating peptide 1-beta chain (94 aa).

The first 19 residues, 1–19 (MKILAVVLISVIVLNTANG), serve as a signal peptide directing secretion. Residues 20–87 (ENYYPQKYTN…YFNALESQCP (68 aa)) enclose the LCN-type CS-alpha/beta domain. 3 disulfides stabilise this stretch: Cys34–Cys56, Cys42–Cys66, and Cys46–Cys68.

The protein belongs to the long (3 C-C) scorpion toxin superfamily. Homodimer; disulfide-linked or monomer (edited version) or heterodimer of an alpha chain (AC P0CI44 or AC P0CI45) and this beta chain (non-edited version). As to expression, expressed by the venom gland.

The protein localises to the secreted. Its function is as follows. The homodimer inhibits HMG-CoA reductase (HMGCR) (32% of inhibition produced by 0.6 uM), a glycoprotein involved in the control of cholesterol biosynthesis. The inhibitory effects of bumarsin are seen at much lower concentrations (0.6 uM) than that for statins such as atorvastatin (5 mM) and simvastatin (10 uM). In addition to inhibition of HMG-CoA reductase, this protein lowers cholesterol levels by inducing steroid hormone synthesis via StAR, and by increasing reverse cholesterol transport mediated by the induction of ABCA1 and APOA1. In terms of biological role, the heterodimer non-edited LVP1 induces lipolysis in rat adipocytes. Induction of lipolysis by LVP1 appears to be mediated through the beta-2 adrenergic receptor pathway (ADRB2). Functionally, the monomer edited version, similar to alpha-toxins, may modulate voltage-gated sodium channels (Nav) and may block voltage-gated potassium channels (Kv). In Lychas mucronatus (Chinese swimming scorpion), this protein is Lipolysis-activating peptide 1-beta chain.